The primary structure comprises 237 residues: Ribonuclease PH (237 aa).

Residues arginine 86 and 124-126 each bind phosphate; that span reads GTR.

Belongs to the RNase PH family. Homohexameric ring arranged as a trimer of dimers.

It carries out the reaction tRNA(n+1) + phosphate = tRNA(n) + a ribonucleoside 5'-diphosphate. Phosphorolytic 3'-5' exoribonuclease that plays an important role in tRNA 3'-end maturation. Removes nucleotide residues following the 3'-CCA terminus of tRNAs; can also add nucleotides to the ends of RNA molecules by using nucleoside diphosphates as substrates, but this may not be physiologically important. Probably plays a role in initiation of 16S rRNA degradation (leading to ribosome degradation) during starvation. The polypeptide is Ribonuclease PH (Shewanella denitrificans (strain OS217 / ATCC BAA-1090 / DSM 15013)).